Here is a 263-residue protein sequence, read N- to C-terminus: MSKRLSIKEIDALLRQGDASIDETFLAMLKADERKGVQSALKRYERQLEKEKALWMEHEEMLAYEKDLWAKGYEHVAGLDEVGRGPLAGPVVTAAVILPKDVQLPGLTDSKKLAKETRESFYDRIKEVALAWSVAIVPVTVIDEVNIYQATKQGMMSAIDQLSVNPDALLLDAMNLPLSLPQQSLIKGDQKSLSIAASSVLAKVTRDRYMADLANRYPEYGFERHVGYGTEEHLAALNAHGITPEHRRSFRPVQETAATRQTS.

The RNase H type-2 domain occupies 74–262; that stretch reads EHVAGLDEVG…VQETAATRQT (189 aa). Aspartate 80, glutamate 81, and aspartate 172 together coordinate a divalent metal cation.

It belongs to the RNase HII family. The cofactor is Mn(2+). Mg(2+) is required as a cofactor.

The protein localises to the cytoplasm. It catalyses the reaction Endonucleolytic cleavage to 5'-phosphomonoester.. Its function is as follows. Endonuclease that specifically degrades the RNA of RNA-DNA hybrids. The sequence is that of Ribonuclease HII (rnhB) from Halalkalibacterium halodurans (strain ATCC BAA-125 / DSM 18197 / FERM 7344 / JCM 9153 / C-125) (Bacillus halodurans).